Here is a 301-residue protein sequence, read N- to C-terminus: Protoheme IX farnesyltransferase 1 (301 aa).

Transmembrane regions (helical) follow at residues 29-49 (VVALMLLTVLVGMCLAVPHAV), 51-71 (VQPLLAGMLGIAMMAGSAAAL), 101-121 (ALIFAASLGSLGFIVLYSLVN), 123-143 (LTAWLTFASLIGYALVYTAYL), 150-170 (NIVIGGLAGAMPPLLGWTAVT), 177-197 (ALLLVIIIFTWTPPHFWALAI), 223-243 (CILLYTVLLAIACLLPVLVGM), 244-264 (CGPVYFVCSSLLSTGFIYKAW), and 275-295 (AMQVFRFSIYHLMLLFMALLL).

The protein belongs to the UbiA prenyltransferase family. Protoheme IX farnesyltransferase subfamily.

Its subcellular location is the cell inner membrane. It catalyses the reaction heme b + (2E,6E)-farnesyl diphosphate + H2O = Fe(II)-heme o + diphosphate. Its pathway is porphyrin-containing compound metabolism; heme O biosynthesis; heme O from protoheme: step 1/1. In terms of biological role, converts heme B (protoheme IX) to heme O by substitution of the vinyl group on carbon 2 of heme B porphyrin ring with a hydroxyethyl farnesyl side group. The polypeptide is Protoheme IX farnesyltransferase 1 (Shewanella baltica (strain OS185)).